Here is a 237-residue protein sequence, read N- to C-terminus: Ribonuclease PH (237 aa).

Phosphate is bound by residues R86 and 124–126 (GTR).

This sequence belongs to the RNase PH family. Homohexameric ring arranged as a trimer of dimers.

It catalyses the reaction tRNA(n+1) + phosphate = tRNA(n) + a ribonucleoside 5'-diphosphate. Phosphorolytic 3'-5' exoribonuclease that plays an important role in tRNA 3'-end maturation. Removes nucleotide residues following the 3'-CCA terminus of tRNAs; can also add nucleotides to the ends of RNA molecules by using nucleoside diphosphates as substrates, but this may not be physiologically important. Probably plays a role in initiation of 16S rRNA degradation (leading to ribosome degradation) during starvation. The protein is Ribonuclease PH of Shewanella piezotolerans (strain WP3 / JCM 13877).